The sequence spans 902 residues: Viral-enhancing factor (902 aa).

The Peptidase M60 domain maps to 27–330; that stretch reads HRRTEVGVVL…IFAWLYNPQR (304 aa). Asn-73, Asn-265, Asn-278, Asn-339, Asn-540, Asn-593, Asn-594, Asn-620, Asn-782, and Asn-840 each carry an N-linked (GlcNAc...) asparagine; by host glycan.

Functionally, involved in disruption of the peritrophic membrane and fusion of nucleocapsids with midgut cells. This Heliothis (HaGV) protein is Viral-enhancing factor (VEF).